A 123-amino-acid chain; its full sequence is Small ribosomal subunit protein uS12 (123 aa).

Asp89 bears the 3-methylthioaspartic acid mark.

It belongs to the universal ribosomal protein uS12 family. Part of the 30S ribosomal subunit. Contacts proteins S8 and S17. May interact with IF1 in the 30S initiation complex.

With S4 and S5 plays an important role in translational accuracy. In terms of biological role, interacts with and stabilizes bases of the 16S rRNA that are involved in tRNA selection in the A site and with the mRNA backbone. Located at the interface of the 30S and 50S subunits, it traverses the body of the 30S subunit contacting proteins on the other side and probably holding the rRNA structure together. The combined cluster of proteins S8, S12 and S17 appears to hold together the shoulder and platform of the 30S subunit. The sequence is that of Small ribosomal subunit protein uS12 from Trichlorobacter lovleyi (strain ATCC BAA-1151 / DSM 17278 / SZ) (Geobacter lovleyi).